Reading from the N-terminus, the 634-residue chain is Chaperone protein HtpG (634 aa).

Residues 1–342 are a; substrate-binding; the sequence is MSVETQKETL…SNDLSLNVSR (342 aa). The interval 343–559 is b; the sequence is EILQKDPVID…EQDLGLQMRQ (217 aa). The interval 560–634 is c; sequence ILEASGQKVP…LNKLLVELSA (75 aa).

This sequence belongs to the heat shock protein 90 family. In terms of assembly, homodimer.

It localises to the cytoplasm. Molecular chaperone. Has ATPase activity. This is Chaperone protein HtpG from Ectopseudomonas mendocina (strain ymp) (Pseudomonas mendocina).